The following is a 357-amino-acid chain: DNA polymerase IV (357 aa).

The UmuC domain maps to 4–185 (IIHVDMDCYF…LSLRQIPGVG (182 aa)). Residues D8 and D103 each contribute to the Mg(2+) site. Residue E104 is part of the active site.

This sequence belongs to the DNA polymerase type-Y family. As to quaternary structure, monomer. Mg(2+) serves as cofactor.

Its subcellular location is the cytoplasm. It carries out the reaction DNA(n) + a 2'-deoxyribonucleoside 5'-triphosphate = DNA(n+1) + diphosphate. Poorly processive, error-prone DNA polymerase involved in untargeted mutagenesis. Copies undamaged DNA at stalled replication forks, which arise in vivo from mismatched or misaligned primer ends. These misaligned primers can be extended by PolIV. Exhibits no 3'-5' exonuclease (proofreading) activity. May be involved in translesional synthesis, in conjunction with the beta clamp from PolIII. This Shewanella oneidensis (strain ATCC 700550 / JCM 31522 / CIP 106686 / LMG 19005 / NCIMB 14063 / MR-1) protein is DNA polymerase IV.